A 375-amino-acid chain; its full sequence is Aminomethyltransferase (375 aa).

It belongs to the GcvT family. As to quaternary structure, the glycine cleavage system is composed of four proteins: P, T, L and H.

The enzyme catalyses N(6)-[(R)-S(8)-aminomethyldihydrolipoyl]-L-lysyl-[protein] + (6S)-5,6,7,8-tetrahydrofolate = N(6)-[(R)-dihydrolipoyl]-L-lysyl-[protein] + (6R)-5,10-methylene-5,6,7,8-tetrahydrofolate + NH4(+). In terms of biological role, the glycine cleavage system catalyzes the degradation of glycine. The chain is Aminomethyltransferase from Ralstonia pickettii (strain 12J).